The following is a 417-amino-acid chain: Exodeoxyribonuclease 7 large subunit (417 aa).

Belongs to the XseA family. As to quaternary structure, heterooligomer composed of large and small subunits.

It localises to the cytoplasm. The enzyme catalyses Exonucleolytic cleavage in either 5'- to 3'- or 3'- to 5'-direction to yield nucleoside 5'-phosphates.. Functionally, bidirectionally degrades single-stranded DNA into large acid-insoluble oligonucleotides, which are then degraded further into small acid-soluble oligonucleotides. The chain is Exodeoxyribonuclease 7 large subunit from Helicobacter hepaticus (strain ATCC 51449 / 3B1).